Consider the following 257-residue polypeptide: Flap endonuclease Xni (257 aa).

Asp-109 provides a ligand contact to Mg(2+). Residues 165-255 (LKPEQLADYW…FNLQDIRYEK (91 aa)) enclose the 5'-3' exonuclease domain. Positions 176, 177, 187, and 190 each coordinate K(+). Positions 189–194 (GIGPKA) are interaction with DNA.

This sequence belongs to the Xni family. The cofactor is Mg(2+). Requires K(+) as cofactor.

Functionally, has flap endonuclease activity. During DNA replication, flap endonucleases cleave the 5'-overhanging flap structure that is generated by displacement synthesis when DNA polymerase encounters the 5'-end of a downstream Okazaki fragment. This Aliivibrio salmonicida (strain LFI1238) (Vibrio salmonicida (strain LFI1238)) protein is Flap endonuclease Xni.